Reading from the N-terminus, the 263-residue chain is Hydroxyethylthiazole kinase 1 (263 aa).

Residue methionine 42 coordinates substrate. Residues lysine 118 and threonine 164 each contribute to the ATP site. Glycine 191 contacts substrate.

The protein belongs to the Thz kinase family. Requires Mg(2+) as cofactor.

The catalysed reaction is 5-(2-hydroxyethyl)-4-methylthiazole + ATP = 4-methyl-5-(2-phosphooxyethyl)-thiazole + ADP + H(+). It functions in the pathway cofactor biosynthesis; thiamine diphosphate biosynthesis; 4-methyl-5-(2-phosphoethyl)-thiazole from 5-(2-hydroxyethyl)-4-methylthiazole: step 1/1. Catalyzes the phosphorylation of the hydroxyl group of 4-methyl-5-beta-hydroxyethylthiazole (THZ). This chain is Hydroxyethylthiazole kinase 1, found in Clostridium botulinum (strain Okra / Type B1).